The primary structure comprises 556 residues: Membrane protein insertase YidC (556 aa).

The next 5 membrane-spanning stretches (helical) occupy residues 6 to 26 (IVLYMALALIGLSLWNAWQID), 332 to 352 (LDLTVDYGILWFLSSLLFSLM), 358 to 378 (VVGNWGWSIVLVTVLIKLAFY), 428 to 448 (LGGCLPILIQIPVFIALYWVL), and 501 to 521 (VMMFLPILFTGLFWNFPSGLV).

It belongs to the OXA1/ALB3/YidC family. Type 1 subfamily. In terms of assembly, interacts with the Sec translocase complex via SecD. Specifically interacts with transmembrane segments of nascent integral membrane proteins during membrane integration.

It is found in the cell inner membrane. Functionally, required for the insertion and/or proper folding and/or complex formation of integral membrane proteins into the membrane. Involved in integration of membrane proteins that insert both dependently and independently of the Sec translocase complex, as well as at least some lipoproteins. Aids folding of multispanning membrane proteins. In Legionella pneumophila (strain Corby), this protein is Membrane protein insertase YidC.